The following is a 190-amino-acid chain: Elongation factor P (190 aa).

It belongs to the elongation factor P family.

It is found in the cytoplasm. The protein operates within protein biosynthesis; polypeptide chain elongation. In terms of biological role, involved in peptide bond synthesis. Stimulates efficient translation and peptide-bond synthesis on native or reconstituted 70S ribosomes in vitro. Probably functions indirectly by altering the affinity of the ribosome for aminoacyl-tRNA, thus increasing their reactivity as acceptors for peptidyl transferase. This chain is Elongation factor P (efp), found in Mycoplasma genitalium (strain ATCC 33530 / DSM 19775 / NCTC 10195 / G37) (Mycoplasmoides genitalium).